A 631-amino-acid polypeptide reads, in one-letter code: Peptidyl-prolyl cis-trans isomerase CYP71 (631 aa).

The tract at residues 26–45 (VEEEEPMVGPGPAPRGKRKR) is disordered. 4 WD repeats span residues 68 to 106 (MHRD…IEFA), 111 to 150 (SHLG…MMAM), 201 to 240 (IHMN…FPED), and 257 to 297 (KCKT…RRVY). A PPIase cyclophilin-type domain is found at 474–628 (LPENVIMHTT…QDVKILNVTV (155 aa)).

This sequence belongs to the cyclophilin-type PPIase family. In terms of assembly, interacts with FAS1 and LHP1. Interacts (via WD repeat domain) with histone H3. In terms of tissue distribution, ubiquitous. Expressed in the meristems.

Its subcellular location is the nucleus. It carries out the reaction [protein]-peptidylproline (omega=180) = [protein]-peptidylproline (omega=0). In terms of biological role, PPIases accelerate the folding of proteins. It catalyzes the cis-trans isomerization of proline imidic peptide bonds in oligopeptides. Histone proline isomerase that increases the rate of cis-trans isomerization of the synthetic histone H3 peptides H3P30 (RKSAP30F-p-nitroanilide) and H3P30K27me3 (RKme3-SAP30F-p-nitroanilide) in the histone H3 N-terminal tail, in vitro. Histone remodeling factor involved in chromatin-based gene silencing. Reinforces H3K27 methylation. Involved in fundamental processes of chromatin assembly and histone modification by mediating the targeting of FAS1 and LHP1 on the chromatin. Required for the formation and development of leaves, for normal phyllotaxy and for the formation, maintenance and activity of root and shoot apical meristems. This Arabidopsis thaliana (Mouse-ear cress) protein is Peptidyl-prolyl cis-trans isomerase CYP71.